A 373-amino-acid polypeptide reads, in one-letter code: 4-hydroxy-3-methylbut-2-en-1-yl diphosphate synthase (flavodoxin) (373 aa).

4 residues coordinate [4Fe-4S] cluster: cysteine 268, cysteine 271, cysteine 303, and glutamate 310.

It belongs to the IspG family. The cofactor is [4Fe-4S] cluster.

The catalysed reaction is (2E)-4-hydroxy-3-methylbut-2-enyl diphosphate + oxidized [flavodoxin] + H2O + 2 H(+) = 2-C-methyl-D-erythritol 2,4-cyclic diphosphate + reduced [flavodoxin]. It participates in isoprenoid biosynthesis; isopentenyl diphosphate biosynthesis via DXP pathway; isopentenyl diphosphate from 1-deoxy-D-xylulose 5-phosphate: step 5/6. Functionally, converts 2C-methyl-D-erythritol 2,4-cyclodiphosphate (ME-2,4cPP) into 1-hydroxy-2-methyl-2-(E)-butenyl 4-diphosphate. In Exiguobacterium sp. (strain ATCC BAA-1283 / AT1b), this protein is 4-hydroxy-3-methylbut-2-en-1-yl diphosphate synthase (flavodoxin).